The following is a 122-amino-acid chain: Large ribosomal subunit protein uL14c (122 aa).

Belongs to the universal ribosomal protein uL14 family. In terms of assembly, part of the 50S ribosomal subunit.

Its subcellular location is the plastid. The protein localises to the chloroplast. In terms of biological role, binds to 23S rRNA. This chain is Large ribosomal subunit protein uL14c, found in Anthoceros angustus (Hornwort).